The chain runs to 320 residues: uncharacterized protein (320 aa).

This is an uncharacterized protein from Orgyia pseudotsugata (Douglas-fir tussock moth).